Consider the following 599-residue polypeptide: Nucleolar protein dnt1 (599 aa).

Ser174 bears the Phosphoserine mark. 2 disordered regions span residues 210–262 and 292–599; these read TQEE…PSRL and DKSL…AALV. The span at 218 to 241 shows a compositional bias: polar residues; it reads QSFNSSLTPSQPTTYNRANFFSIN. Low complexity predominate over residues 242-251; that stretch reads DASSDSSSDA. Basic and acidic residues predominate over residues 292–303; the sequence is DKSLRSSTREVS. The residue at position 306 (Ser306) is a Phosphoserine. Positions 307 to 320 are enriched in acidic residues; that stretch reads PNEDSVNDDSSSDV. Residues 321-333 are compositionally biased toward basic and acidic residues; that stretch reads SDEKETEAKHEIR. Over residues 344-354 the composition is skewed to polar residues; sequence SHPSTAVPSEN. A compositionally biased stretch (low complexity) spans 364 to 380; the sequence is LSESSTTSISSSPSENS. Residues 390–401 are compositionally biased toward polar residues; that stretch reads DSPNKSLVNDNV. Residues 402–413 show a composition bias toward basic and acidic residues; sequence SAKHDKESENGK. Residues 421 to 431 are compositionally biased toward polar residues; sequence QTLVTTSTISA. Residues 436 to 452 show a composition bias toward acidic residues; the sequence is PSDEIGSENDSDSDSDS. Residues 456–480 show a composition bias toward polar residues; the sequence is VPLSQLQKKSQQRNSVSHEIQNRGT. Over residues 483–500 the composition is skewed to basic and acidic residues; sequence SPKEPKAKPSTERPETHR. The segment covering 501–514 has biased composition (polar residues); sequence TLSYSRLSELSKTF. A Phosphothreonine modification is found at Thr513. Basic and acidic residues-rich tracts occupy residues 533 to 542 and 558 to 574; these read ESKEEGRSDE and NSEKEDRSNPIPVEKRA.

Phosphorylated by clp1.

The protein resides in the cytoplasm. It is found in the nucleus. It localises to the nucleolus. Its subcellular location is the cytoskeleton. The protein localises to the spindle. Negatively regulates the septation initiation network (SIN) pathway, independently of the cdc14 phosphatase clp1. May also have a role in silencing rDNA transcription. Required for maintaining the exclusive nucleolus localization of nuc1. The chain is Nucleolar protein dnt1 (dnt1) from Schizosaccharomyces pombe (strain 972 / ATCC 24843) (Fission yeast).